We begin with the raw amino-acid sequence, 262 residues long: MSEPHLLIDAGNSRIKWALADAQRTLVRTGAFGHTRDGGADPDWADLPRPRGAWISNVAGADVGARLDALLDTRWPGLPRTTIRSRPAQCGVTNGYTTPEQLGSDRWAGLIGARAAFPDEHLLIATFGTATTLEALRADGRFTGGLIAPGWALMMRALGTHTAQLPTLTTDIASGLLADAQAQPFQVDTPRSLSAGCLYAQAGLIERAWRDLAAAWQAPVRLVLAGGAADEIARALTLPHTRHDALILSGLALIAAEASAQD.

9 to 16 lines the ATP pocket; that stretch reads DAGNSRIK. Substrate-binding positions include Tyr-96 and 103-106; that span reads GSDR. Asp-105 serves as the catalytic Proton acceptor. Thr-129 contacts ATP. Substrate is bound at residue Thr-189.

This sequence belongs to the type III pantothenate kinase family. As to quaternary structure, homodimer. NH4(+) is required as a cofactor. The cofactor is K(+).

Its subcellular location is the cytoplasm. It catalyses the reaction (R)-pantothenate + ATP = (R)-4'-phosphopantothenate + ADP + H(+). It functions in the pathway cofactor biosynthesis; coenzyme A biosynthesis; CoA from (R)-pantothenate: step 1/5. Its function is as follows. Catalyzes the phosphorylation of pantothenate (Pan), the first step in CoA biosynthesis. The chain is Type III pantothenate kinase from Burkholderia multivorans (strain ATCC 17616 / 249).